Consider the following 506-residue polypeptide: Kynurenine 3-monooxygenase (506 aa).

The protein belongs to the aromatic-ring hydroxylase family. KMO subfamily. Requires FAD as cofactor.

The protein localises to the mitochondrion outer membrane. It carries out the reaction L-kynurenine + NADPH + O2 + H(+) = 3-hydroxy-L-kynurenine + NADP(+) + H2O. The protein operates within cofactor biosynthesis; NAD(+) biosynthesis; quinolinate from L-kynurenine: step 1/3. Functionally, catalyzes the hydroxylation of L-kynurenine (L-Kyn) to form 3-hydroxy-L-kynurenine (L-3OHKyn). Required for synthesis of quinolinic acid. In Emericella nidulans (strain FGSC A4 / ATCC 38163 / CBS 112.46 / NRRL 194 / M139) (Aspergillus nidulans), this protein is Kynurenine 3-monooxygenase (bna4).